Consider the following 395-residue polypeptide: S-adenosylmethionine synthase 3 (395 aa).

Residue glutamate 10 participates in Mg(2+) binding. Residue histidine 16 coordinates ATP. Position 44 (glutamate 44) interacts with K(+). L-methionine contacts are provided by glutamate 57 and glutamine 100. ATP-binding positions include 168-170 (DGK), 236-239 (SGRF), aspartate 247, 253-254 (RK), alanine 270, lysine 274, and lysine 278. Aspartate 247 contributes to the L-methionine binding site. Residue lysine 278 participates in L-methionine binding.

The protein belongs to the AdoMet synthase family. In terms of assembly, homotetramer. Mn(2+) is required as a cofactor. The cofactor is Mg(2+). Requires Co(2+) as cofactor. K(+) serves as cofactor.

It localises to the cytoplasm. The catalysed reaction is L-methionine + ATP + H2O = S-adenosyl-L-methionine + phosphate + diphosphate. Its pathway is amino-acid biosynthesis; S-adenosyl-L-methionine biosynthesis; S-adenosyl-L-methionine from L-methionine: step 1/1. Catalyzes the formation of S-adenosylmethionine from methionine and ATP. The reaction comprises two steps that are both catalyzed by the same enzyme: formation of S-adenosylmethionine (AdoMet) and triphosphate, and subsequent hydrolysis of the triphosphate. This Populus trichocarpa (Western balsam poplar) protein is S-adenosylmethionine synthase 3 (METK3).